The sequence spans 1052 residues: Swarming motility protein SwrC (1052 aa).

It belongs to the resistance-nodulation-cell division (RND) (TC 2.A.6) family.

Functionally, required for self-resistance to surfactin, an antimicrobial lipopeptide surfactant produced by B.subtilis. Also required for swarming motility. The chain is Swarming motility protein SwrC (swrC) from Bacillus subtilis (strain 168).